Reading from the N-terminus, the 420-residue chain is Dynein axonemal assembly factor 4 (420 aa).

In terms of domain architecture, CS spans 3–87; it reads VRVSEFSWQQ…KEPVLWDSLS (85 aa). The tract at residues 7–103 is mediates interaction with ESR1 and STUB1; that stretch reads EFSWQQTPAT…EMMQRIREKS (97 aa). Positions 164–192 are enriched in basic and acidic residues; sequence ECQKKADGQKRVQRKEKPLEGKQAEETKA. The disordered stretch occupies residues 164–212; sequence ECQKKADGQKRVQRKEKPLEGKQAEETKALKPRGLPRKAPPTRLPTRGR. TPR repeat units follow at residues 288-321, 322-355, and 364-397; these read PDWL…NCKI, PLLY…LTPP, and MKAH…DPAN.

In terms of assembly, interacts with ZMYND10. Interacts with ESR1 and ESR2. Interacts with STUB1. Interacts with DNAAF2. Interacts with CCT3, CCT4, CCT5 and CCT8. Interacts with DNAAF6/PIH1D3.

Its subcellular location is the nucleus. It is found in the cytoplasm. It localises to the dynein axonemal particle. The protein localises to the cell projection. The protein resides in the neuron projection. Its function is as follows. Involved in neuronal migration during development of the cerebral neocortex. May regulate the stability and proteasomal degradation of the estrogen receptors that play an important role in neuronal differentiation, survival and plasticity. Axonemal dynein assembly factor required for ciliary motility. The polypeptide is Dynein axonemal assembly factor 4 (Mus musculus (Mouse)).